Here is a 907-residue protein sequence, read N- to C-terminus: Protein translocase subunit SecA (907 aa).

Residues Q87, 105–109 (GEGKT), and D510 contribute to the ATP site. Residues C892, C894, C903, and H904 each contribute to the Zn(2+) site.

Belongs to the SecA family. In terms of assembly, monomer and homodimer. Part of the essential Sec protein translocation apparatus which comprises SecA, SecYEG and auxiliary proteins SecDF-YajC and YidC. Requires Zn(2+) as cofactor.

The protein resides in the cell inner membrane. It localises to the cytoplasm. It carries out the reaction ATP + H2O + cellular proteinSide 1 = ADP + phosphate + cellular proteinSide 2.. Its function is as follows. Part of the Sec protein translocase complex. Interacts with the SecYEG preprotein conducting channel. Has a central role in coupling the hydrolysis of ATP to the transfer of proteins into and across the cell membrane, serving both as a receptor for the preprotein-SecB complex and as an ATP-driven molecular motor driving the stepwise translocation of polypeptide chains across the membrane. The protein is Protein translocase subunit SecA of Acinetobacter baumannii (strain ACICU).